A 461-amino-acid polypeptide reads, in one-letter code: ATP synthase subunit beta (461 aa).

Residue 151 to 158 (GGAGVGKT) coordinates ATP.

It belongs to the ATPase alpha/beta chains family. F-type ATPases have 2 components, CF(1) - the catalytic core - and CF(0) - the membrane proton channel. CF(1) has five subunits: alpha(3), beta(3), gamma(1), delta(1), epsilon(1). CF(0) has three main subunits: a(1), b(2) and c(9-12). The alpha and beta chains form an alternating ring which encloses part of the gamma chain. CF(1) is attached to CF(0) by a central stalk formed by the gamma and epsilon chains, while a peripheral stalk is formed by the delta and b chains.

Its subcellular location is the cell inner membrane. It catalyses the reaction ATP + H2O + 4 H(+)(in) = ADP + phosphate + 5 H(+)(out). Produces ATP from ADP in the presence of a proton gradient across the membrane. The catalytic sites are hosted primarily by the beta subunits. This chain is ATP synthase subunit beta, found in Pseudoalteromonas translucida (strain TAC 125).